We begin with the raw amino-acid sequence, 159 residues long: Ribosome maturation factor RimP (159 aa).

It belongs to the RimP family.

The protein localises to the cytoplasm. Functionally, required for maturation of 30S ribosomal subunits. This chain is Ribosome maturation factor RimP, found in Geotalea uraniireducens (strain Rf4) (Geobacter uraniireducens).